A 288-amino-acid chain; its full sequence is ATP synthase gamma chain (288 aa).

This sequence belongs to the ATPase gamma chain family. In terms of assembly, F-type ATPases have 2 components, CF(1) - the catalytic core - and CF(0) - the membrane proton channel. CF(1) has five subunits: alpha(3), beta(3), gamma(1), delta(1), epsilon(1). CF(0) has three main subunits: a, b and c.

The protein resides in the cell inner membrane. Functionally, produces ATP from ADP in the presence of a proton gradient across the membrane. The gamma chain is believed to be important in regulating ATPase activity and the flow of protons through the CF(0) complex. The sequence is that of ATP synthase gamma chain from Aeromonas hydrophila subsp. hydrophila (strain ATCC 7966 / DSM 30187 / BCRC 13018 / CCUG 14551 / JCM 1027 / KCTC 2358 / NCIMB 9240 / NCTC 8049).